The following is a 412-amino-acid chain: L-cysteine:1D-myo-inositol 2-amino-2-deoxy-alpha-D-glucopyranoside ligase (412 aa).

Cysteine 43 contributes to the Zn(2+) binding site. Residues 43 to 46 (CGIT), threonine 58, and 81 to 83 (NVT) contribute to the L-cysteinyl-5'-AMP site. Residues 45–55 (ITPYDATHLGH) carry the 'HIGH' region motif. Positions 186 to 191 (ERGGDP) match the 'ERGGDP' region motif. An L-cysteinyl-5'-AMP-binding site is contributed by tryptophan 227. Cysteine 231 contributes to the Zn(2+) binding site. 249-251 (GND) lines the L-cysteinyl-5'-AMP pocket. Histidine 256 serves as a coordination point for Zn(2+). Isoleucine 283 contacts L-cysteinyl-5'-AMP. Residues 289–293 (KMSKS) carry the 'KMSKS' region motif.

The protein belongs to the class-I aminoacyl-tRNA synthetase family. MshC subfamily. As to quaternary structure, monomer. Zn(2+) is required as a cofactor.

It carries out the reaction 1D-myo-inositol 2-amino-2-deoxy-alpha-D-glucopyranoside + L-cysteine + ATP = 1D-myo-inositol 2-(L-cysteinylamino)-2-deoxy-alpha-D-glucopyranoside + AMP + diphosphate + H(+). Catalyzes the ATP-dependent condensation of GlcN-Ins and L-cysteine to form L-Cys-GlcN-Ins. This is L-cysteine:1D-myo-inositol 2-amino-2-deoxy-alpha-D-glucopyranoside ligase from Salinispora arenicola (strain CNS-205).